Consider the following 443-residue polypeptide: ATP-dependent protease ATPase subunit HslU (443 aa).

ATP-binding positions include Ile18, 60 to 65 (GVGKTE), Asp256, Glu321, and Arg393.

This sequence belongs to the ClpX chaperone family. HslU subfamily. In terms of assembly, a double ring-shaped homohexamer of HslV is capped on each side by a ring-shaped HslU homohexamer. The assembly of the HslU/HslV complex is dependent on binding of ATP.

Its subcellular location is the cytoplasm. Functionally, ATPase subunit of a proteasome-like degradation complex; this subunit has chaperone activity. The binding of ATP and its subsequent hydrolysis by HslU are essential for unfolding of protein substrates subsequently hydrolyzed by HslV. HslU recognizes the N-terminal part of its protein substrates and unfolds these before they are guided to HslV for hydrolysis. This chain is ATP-dependent protease ATPase subunit HslU, found in Pectobacterium carotovorum subsp. carotovorum (strain PC1).